A 46-amino-acid polypeptide reads, in one-letter code: Viscotoxin-A2 (46 aa).

3 disulfide bridges follow: Cys3–Cys40, Cys4–Cys32, and Cys16–Cys26.

The protein belongs to the plant thionin (TC 1.C.44) family.

The protein resides in the secreted. Thionins are small plant proteins which are toxic to animal cells. They seem to exert their toxic effect at the level of the cell membrane. Their precise function is not known. The sequence is that of Viscotoxin-A2 (THI2.3) from Viscum album (European mistletoe).